The following is a 501-amino-acid chain: Flagellin (501 aa).

Belongs to the bacterial flagellin family.

It is found in the secreted. Its subcellular location is the bacterial flagellum. Functionally, flagellin is the subunit protein which polymerizes to form the filaments of bacterial flagella. This Salmonella choleraesuis (strain SC-B67) protein is Flagellin (fliC).